Consider the following 206-residue polypeptide: Proteasome subunit beta 2 (206 aa).

The propeptide at 1 to 7 (MREAVSK) is removed in mature form; by autocatalysis. T8 functions as the Nucleophile in the catalytic mechanism.

It belongs to the peptidase T1B family. In terms of assembly, the 20S proteasome core is composed of 14 alpha and 14 beta subunits that assemble into four stacked heptameric rings, resulting in a barrel-shaped structure. The two inner rings, each composed of seven catalytic beta subunits, are sandwiched by two outer rings, each composed of seven alpha subunits. The catalytic chamber with the active sites is on the inside of the barrel. Has a gated structure, the ends of the cylinder being occluded by the N-termini of the alpha-subunits. Is capped at one or both ends by the proteasome regulatory ATPase, PAN.

The protein localises to the cytoplasm. The catalysed reaction is Cleavage of peptide bonds with very broad specificity.. Its activity is regulated as follows. The formation of the proteasomal ATPase PAN-20S proteasome complex, via the docking of the C-termini of PAN into the intersubunit pockets in the alpha-rings, triggers opening of the gate for substrate entry. Interconversion between the open-gate and close-gate conformations leads to a dynamic regulation of the 20S proteasome proteolysis activity. Functionally, component of the proteasome core, a large protease complex with broad specificity involved in protein degradation. The sequence is that of Proteasome subunit beta 2 from Desulfurococcus amylolyticus (strain DSM 18924 / JCM 16383 / VKM B-2413 / 1221n) (Desulfurococcus kamchatkensis).